A 279-amino-acid chain; its full sequence is Biotin synthase (279 aa).

A Radical SAM core domain is found at 2–228 (KTIMLCAICS…ETRVMIAGGR (227 aa)). [4Fe-4S] cluster contacts are provided by Cys17, Cys21, and Cys24. The [2Fe-2S] cluster site is built by Cys61, Cys96, Cys154, and Arg221.

Belongs to the radical SAM superfamily. Biotin synthase family. Homodimer. The cofactor is [4Fe-4S] cluster. [2Fe-2S] cluster serves as cofactor.

The catalysed reaction is (4R,5S)-dethiobiotin + (sulfur carrier)-SH + 2 reduced [2Fe-2S]-[ferredoxin] + 2 S-adenosyl-L-methionine = (sulfur carrier)-H + biotin + 2 5'-deoxyadenosine + 2 L-methionine + 2 oxidized [2Fe-2S]-[ferredoxin]. It functions in the pathway cofactor biosynthesis; biotin biosynthesis; biotin from 7,8-diaminononanoate: step 2/2. Functionally, catalyzes the conversion of dethiobiotin (DTB) to biotin by the insertion of a sulfur atom into dethiobiotin via a radical-based mechanism. In Campylobacter concisus (strain 13826), this protein is Biotin synthase.